The chain runs to 310 residues: Small ribosomal subunit biogenesis GTPase RsgA (310 aa).

The 162-residue stretch at 77-238 (LSKQSHILAA…IIDTPGIKGF (162 aa)) folds into the CP-type G domain. GTP is bound by residues 126-129 (NKVD) and 180-188 (GHSGVGKST). The Zn(2+) site is built by cysteine 262, cysteine 267, histidine 269, and cysteine 275.

It belongs to the TRAFAC class YlqF/YawG GTPase family. RsgA subfamily. In terms of assembly, monomer. Associates with 30S ribosomal subunit, binds 16S rRNA. Requires Zn(2+) as cofactor.

The protein resides in the cytoplasm. Its function is as follows. One of several proteins that assist in the late maturation steps of the functional core of the 30S ribosomal subunit. Helps release RbfA from mature subunits. May play a role in the assembly of ribosomal proteins into the subunit. Circularly permuted GTPase that catalyzes slow GTP hydrolysis, GTPase activity is stimulated by the 30S ribosomal subunit. This is Small ribosomal subunit biogenesis GTPase RsgA from Bacteroides fragilis (strain ATCC 25285 / DSM 2151 / CCUG 4856 / JCM 11019 / LMG 10263 / NCTC 9343 / Onslow / VPI 2553 / EN-2).